A 223-amino-acid polypeptide reads, in one-letter code: Putative 3-methyladenine DNA glycosylase (223 aa).

It belongs to the DNA glycosylase MPG family.

The sequence is that of Putative 3-methyladenine DNA glycosylase from Pseudomonas syringae pv. syringae (strain B728a).